A 399-amino-acid chain; its full sequence is Protein shisa-8 (399 aa).

Residues 1 to 36 form the signal peptide; the sequence is MERAGARGQRCGRRSHGLPLALRLALLLAGSPSGRA. Residues 37-136 are Extracellular-facing; the sequence is GAPEEQEIAG…APRDPARERS (100 aa). N73 is a glycosylation site (N-linked (GlcNAc...) asparagine). Residues 137–157 traverse the membrane as a helical segment; sequence HTAVYAVCGVAALLVLVGIGA. Topologically, residues 158–399 are cytoplasmic; the sequence is RLGLERAHSP…STNSKAEVTV (242 aa). 2 disordered regions span residues 207–248 and 378–399; these read GDGV…GGSL and FYSS…EVTV. Positions 389–399 are enriched in polar residues; it reads LSTNSKAEVTV.

The protein belongs to the shisa family. As to quaternary structure, interacts with AMPAR subunits GRIA1 and GRIA2. As to expression, brain-specific. Highly expressed in cerebellum and olfactory bulb.

Its subcellular location is the membrane. May regulate trafficking and current kinetics of AMPA-type glutamate receptor (AMPAR) at synapses. The protein is Protein shisa-8 of Mus musculus (Mouse).